The sequence spans 169 residues: NADH-quinone oxidoreductase subunit B (169 aa).

Residues Cys-42, Cys-43, Cys-107, and Cys-136 each contribute to the [4Fe-4S] cluster site.

It belongs to the complex I 20 kDa subunit family. As to quaternary structure, NDH-1 is composed of 14 different subunits. Subunits NuoB, C, D, E, F, and G constitute the peripheral sector of the complex. The cofactor is [4Fe-4S] cluster.

Its subcellular location is the cell inner membrane. The catalysed reaction is a quinone + NADH + 5 H(+)(in) = a quinol + NAD(+) + 4 H(+)(out). Functionally, NDH-1 shuttles electrons from NADH, via FMN and iron-sulfur (Fe-S) centers, to quinones in the respiratory chain. The immediate electron acceptor for the enzyme in this species is believed to be ubiquinone. Couples the redox reaction to proton translocation (for every two electrons transferred, four hydrogen ions are translocated across the cytoplasmic membrane), and thus conserves the redox energy in a proton gradient. This chain is NADH-quinone oxidoreductase subunit B, found in Nitratiruptor sp. (strain SB155-2).